Here is a 218-residue protein sequence, read N- to C-terminus: Small ribosomal subunit protein uS3c (218 aa).

In terms of domain architecture, KH type-2 spans 47-118 (VQKNMRIFSG…KLNIAITRIG (72 aa)).

It belongs to the universal ribosomal protein uS3 family. In terms of assembly, part of the 30S ribosomal subunit.

The protein localises to the plastid. It localises to the chloroplast. This Cucumis sativus (Cucumber) protein is Small ribosomal subunit protein uS3c (rps3).